The sequence spans 299 residues: Probable plastid-lipid-associated protein 13, chloroplastic (299 aa).

The transit peptide at 1–48 (MALIHGSVPGTSAVRLVFSTSASPSRFCLNVPVVKQGWKNSCRRRVLR) directs the protein to the chloroplast. Residue alanine 2 is modified to N-acetylvaline.

The protein belongs to the PAP/fibrillin family.

It is found in the plastid. Its subcellular location is the chloroplast. It localises to the plastoglobule. This is Probable plastid-lipid-associated protein 13, chloroplastic (PAP13) from Arabidopsis thaliana (Mouse-ear cress).